The chain runs to 302 residues: Homoserine kinase (302 aa).

ATP is bound at residue 92 to 102 (PLARGLGSSAT).

This sequence belongs to the GHMP kinase family. Homoserine kinase subfamily.

It is found in the cytoplasm. The catalysed reaction is L-homoserine + ATP = O-phospho-L-homoserine + ADP + H(+). It participates in amino-acid biosynthesis; L-threonine biosynthesis; L-threonine from L-aspartate: step 4/5. Its function is as follows. Catalyzes the ATP-dependent phosphorylation of L-homoserine to L-homoserine phosphate. The polypeptide is Homoserine kinase (Trichormus variabilis (strain ATCC 29413 / PCC 7937) (Anabaena variabilis)).